A 540-amino-acid polypeptide reads, in one-letter code: uncharacterized protein (540 aa).

Over 1–61 the chain is Cytoplasmic; that stretch reads MFSIFKKKTS…TNDSPWQDPT (61 aa). Residues 62–82 form a helical membrane-spanning segment; that stretch reads YFSSFGKELMFIATCMLAQLL. The Extracellular segment spans residues 83 to 108; that stretch reads NQAGQTHALCIMNVLSKSFNSEANNQ. The helical transmembrane segment at 109–129 threads the bilayer; that stretch reads AWLMASFPLAAGSFILISGRL. Residues 130 to 131 lie on the Cytoplasmic side of the membrane; that stretch reads GD. A helical membrane pass occupies residues 132-152; that stretch reads IYGLKKMLIVGYVIVIVWSII. The Extracellular segment spans residues 153–169; that stretch reads SGLSKYSNSDAFFITSR. Residues 170–190 form a helical membrane-spanning segment; it reads AFQGVGIAFILPNIMGLVGHV. The Cytoplasmic segment spans residues 191-203; that stretch reads YKVGSFRKNIVIS. The helical transmembrane segment at 204-224 threads the bilayer; the sequence is FIGACAPTGGMFGGLFGGLIV. Over 225-232 the chain is Extracellular; that stretch reads TEDPNQWP. The helical transmembrane segment at 233 to 253 threads the bilayer; it reads WVFYAFGIATFLSLLMAWYSI. Topologically, residues 254 to 272 are cytoplasmic; it reads PNNVPTNIHGLSMDWTGSA. A helical transmembrane segment spans residues 273-293; the sequence is LAIIGLILFNFVWNQAPIVGW. Residues 294 to 295 are Extracellular-facing; that stretch reads DK. Residues 296 to 316 form a helical membrane-spanning segment; that stretch reads PYIIVLLIISVIFLVAFFVYE. Over 317–334 the chain is Cytoplasmic; sequence SKYAEVPLLPRAMTKNRH. A helical transmembrane segment spans residues 335–355; the sequence is MIMILLAVFLGWGSFGIWTFY. Residues 356-372 are Extracellular-facing; it reads YVSFQLNLRHYSPVWTG. The chain crosses the membrane as a helical span at residues 373-393; sequence GTYFVFVIFGSMAAFFVAFSI. Residues 394–398 are Cytoplasmic-facing; it reads KRLGP. Residues 399–419 form a helical membrane-spanning segment; sequence ALLLCFSLMAFDAGSIMFSVL. The Extracellular segment spans residues 420–429; the sequence is PVEQSYWKLN. A helical transmembrane segment spans residues 430–450; that stretch reads FAMQAILCFGMDLSFPASSII. Residues 451–461 are Cytoplasmic-facing; sequence LSDGLPMQYQG. The helical transmembrane segment at 462–482 threads the bilayer; it reads MAGSLVNTVINYSASLCLGMG. The Extracellular portion of the chain corresponds to 483–502; the sequence is GTVEHQINKSGNDLLKGYRA. The helical transmembrane segment at 503–523 threads the bilayer; that stretch reads AVYLGVGLASLGVVISVTYML. The Cytoplasmic segment spans residues 524–540; sequence ENLWNRHRKSEDRSLEA.

It belongs to the major facilitator superfamily.

The protein localises to the membrane. This is an uncharacterized protein from Saccharomyces cerevisiae (strain ATCC 204508 / S288c) (Baker's yeast).